The following is a 360-amino-acid chain: Dual-specificity RNA methyltransferase RlmN (360 aa).

Glu93 (proton acceptor) is an active-site residue. The Radical SAM core domain occupies 99 to 326 (EEDRNTLCIS…VITRSSRGAD (228 aa)). Cys106 and Cys331 are oxidised to a cystine. [4Fe-4S] cluster is bound by residues Cys113, Cys117, and Cys120. S-adenosyl-L-methionine-binding positions include 158-159 (GE), Ser190, 212-214 (SLN), and Asn288. The active-site S-methylcysteine intermediate is Cys331.

This sequence belongs to the radical SAM superfamily. RlmN family. Requires [4Fe-4S] cluster as cofactor.

It localises to the cytoplasm. The enzyme catalyses adenosine(2503) in 23S rRNA + 2 reduced [2Fe-2S]-[ferredoxin] + 2 S-adenosyl-L-methionine = 2-methyladenosine(2503) in 23S rRNA + 5'-deoxyadenosine + L-methionine + 2 oxidized [2Fe-2S]-[ferredoxin] + S-adenosyl-L-homocysteine. The catalysed reaction is adenosine(37) in tRNA + 2 reduced [2Fe-2S]-[ferredoxin] + 2 S-adenosyl-L-methionine = 2-methyladenosine(37) in tRNA + 5'-deoxyadenosine + L-methionine + 2 oxidized [2Fe-2S]-[ferredoxin] + S-adenosyl-L-homocysteine. Specifically methylates position 2 of adenine 2503 in 23S rRNA and position 2 of adenine 37 in tRNAs. m2A2503 modification seems to play a crucial role in the proofreading step occurring at the peptidyl transferase center and thus would serve to optimize ribosomal fidelity. This is Dual-specificity RNA methyltransferase RlmN from Geobacter sulfurreducens (strain ATCC 51573 / DSM 12127 / PCA).